Consider the following 381-residue polypeptide: 1-deoxy-D-xylulose 5-phosphate reductoisomerase (381 aa).

NADPH is bound by residues Thr10, Gly11, Ser12, Ile13, Gly36, Lys37, Asn38, and Asn122. Lys123 contacts 1-deoxy-D-xylulose 5-phosphate. Glu124 contacts NADPH. Residue Asp148 participates in Mn(2+) binding. 1-deoxy-D-xylulose 5-phosphate-binding residues include Ser149, Glu150, Ser173, and His196. Glu150 is a binding site for Mn(2+). Gly202 contributes to the NADPH binding site. 4 residues coordinate 1-deoxy-D-xylulose 5-phosphate: Ser209, Asn214, Lys215, and Glu218. A Mn(2+)-binding site is contributed by Glu218.

The protein belongs to the DXR family. Mg(2+) is required as a cofactor. Mn(2+) serves as cofactor.

It carries out the reaction 2-C-methyl-D-erythritol 4-phosphate + NADP(+) = 1-deoxy-D-xylulose 5-phosphate + NADPH + H(+). It participates in isoprenoid biosynthesis; isopentenyl diphosphate biosynthesis via DXP pathway; isopentenyl diphosphate from 1-deoxy-D-xylulose 5-phosphate: step 1/6. Functionally, catalyzes the NADPH-dependent rearrangement and reduction of 1-deoxy-D-xylulose-5-phosphate (DXP) to 2-C-methyl-D-erythritol 4-phosphate (MEP). The chain is 1-deoxy-D-xylulose 5-phosphate reductoisomerase from Desulfitobacterium hafniense (strain DSM 10664 / DCB-2).